We begin with the raw amino-acid sequence, 59 residues long: Preprotein translocase subunit SecG (59 aa).

The Cytoplasmic segment spans residues 1 to 33; the sequence is MARRESSGGSGGLMSSAGLMRYFEAEESAIKID. A helical transmembrane segment spans residues 34-55; the sequence is PKTVIIAAVASGAFIWILNFTY. Residues 56 to 59 are Extracellular-facing; sequence GRFW.

It belongs to the SEC61-beta family. As to quaternary structure, component of the protein translocase complex. Heterotrimer consisting of alpha (SecY), beta (SecG) and gamma (SecE) subunits. Can form oligomers of the heterotrimer.

Its subcellular location is the cell membrane. Functionally, involved in protein export. The function of the beta subunit is unknown, but it may be involved in stabilization of the trimeric complex. The protein is Preprotein translocase subunit SecG of Methanocella arvoryzae (strain DSM 22066 / NBRC 105507 / MRE50).